The primary structure comprises 1040 residues: Multidrug resistance protein MdtB (1040 aa).

Transmembrane regions (helical) follow at residues 16-36 (FIMR…AGII), 347-367 (LMMA…NIPA), 369-389 (IIPG…MVFL), 396-416 (LTLM…IVVI), 440-460 (IGFT…PLLF), 472-492 (FAIT…TLTP), 537-557 (WLTL…WVFI), 863-883 (LGST…VLGI), 888-908 (FIHP…ALLA), 911-931 (IAGS…IGIV), 968-988 (ILMT…STGV), and 998-1018 (IGMV…TPVI).

It belongs to the resistance-nodulation-cell division (RND) (TC 2.A.6) family. MdtB subfamily. Part of a tripartite efflux system composed of MdtA, MdtB and MdtC. MdtB forms a heteromultimer with MdtC.

The protein localises to the cell inner membrane. The MdtABC tripartite complex confers resistance against novobiocin and deoxycholate. The sequence is that of Multidrug resistance protein MdtB from Escherichia coli O9:H4 (strain HS).